Reading from the N-terminus, the 177-residue chain is ATP synthase subunit delta (177 aa).

Belongs to the ATPase delta chain family. In terms of assembly, F-type ATPases have 2 components, F(1) - the catalytic core - and F(0) - the membrane proton channel. F(1) has five subunits: alpha(3), beta(3), gamma(1), delta(1), epsilon(1). F(0) has three main subunits: a(1), b(2) and c(10-14). The alpha and beta chains form an alternating ring which encloses part of the gamma chain. F(1) is attached to F(0) by a central stalk formed by the gamma and epsilon chains, while a peripheral stalk is formed by the delta and b chains.

The protein localises to the cell membrane. In terms of biological role, f(1)F(0) ATP synthase produces ATP from ADP in the presence of a proton or sodium gradient. F-type ATPases consist of two structural domains, F(1) containing the extramembraneous catalytic core and F(0) containing the membrane proton channel, linked together by a central stalk and a peripheral stalk. During catalysis, ATP synthesis in the catalytic domain of F(1) is coupled via a rotary mechanism of the central stalk subunits to proton translocation. Its function is as follows. This protein is part of the stalk that links CF(0) to CF(1). It either transmits conformational changes from CF(0) to CF(1) or is implicated in proton conduction. The protein is ATP synthase subunit delta of Macrococcus caseolyticus (strain JCSC5402) (Macrococcoides caseolyticum).